The following is a 280-amino-acid chain: Energy-coupling factor transporter ATP-binding protein EcfA1 (280 aa).

One can recognise an ABC transporter domain in the interval 6–241 (IELKNVTFRY…GDELLDLGLD (236 aa)). ATP is bound at residue 41–48 (GHNGSGKS).

The protein belongs to the ABC transporter superfamily. Energy-coupling factor EcfA family. As to quaternary structure, forms a stable energy-coupling factor (ECF) transporter complex composed of 2 membrane-embedded substrate-binding proteins (S component), 2 ATP-binding proteins (A component) and 2 transmembrane proteins (T component).

The protein resides in the cell membrane. Functionally, ATP-binding (A) component of a common energy-coupling factor (ECF) ABC-transporter complex. Unlike classic ABC transporters this ECF transporter provides the energy necessary to transport a number of different substrates. This chain is Energy-coupling factor transporter ATP-binding protein EcfA1, found in Streptococcus mutans serotype c (strain ATCC 700610 / UA159).